A 183-amino-acid polypeptide reads, in one-letter code: MTSLVVAIGNPGRQYVWTRHNVGFLCVDRLVQQFPGVHFKEAPKLFSDIAKVESSQGSMVFIKPRTYVNLSGKAVLAVKGYYNIATDRILVIADDVNQPFGNVRLRQSAGGGGHKGIKSITQSLGSNDYWQLRLGIGRPQRENVELSDFVLGQFTEEEQIGIQSVFIEASALFSQWCSGTQTA.

Residue Tyr15 participates in tRNA binding. His20 (proton acceptor) is an active-site residue. Residues Tyr67 and Asn69 each coordinate tRNA.

Belongs to the PTH family. Monomer.

Its subcellular location is the cytoplasm. It catalyses the reaction an N-acyl-L-alpha-aminoacyl-tRNA + H2O = an N-acyl-L-amino acid + a tRNA + H(+). Hydrolyzes ribosome-free peptidyl-tRNAs (with 1 or more amino acids incorporated), which drop off the ribosome during protein synthesis, or as a result of ribosome stalling. Functionally, catalyzes the release of premature peptidyl moieties from peptidyl-tRNA molecules trapped in stalled 50S ribosomal subunits, and thus maintains levels of free tRNAs and 50S ribosomes. In Chlamydia abortus (strain DSM 27085 / S26/3) (Chlamydophila abortus), this protein is Peptidyl-tRNA hydrolase.